A 193-amino-acid polypeptide reads, in one-letter code: MLANLDRYKIVLASNSPRRKELMTGLGVDYVVKTLPDVDESYPDTLQGEEIPLFIAREKAAAYQSMIGPEELLITADTIVWHEGKALGKPVGRQDAIEMLRSLSGKSHQVITGVCLTTREWQKCFAAVTDVRFAILDEDEIAYYVDHYQPMDKAGSYGVQEWIGFVGVESISGSYFNVMGLPIQKLYRELKQL.

D77 serves as the catalytic Proton acceptor.

It belongs to the Maf family. YhdE subfamily. A divalent metal cation serves as cofactor.

The protein localises to the cytoplasm. It catalyses the reaction dTTP + H2O = dTMP + diphosphate + H(+). The catalysed reaction is UTP + H2O = UMP + diphosphate + H(+). Its function is as follows. Nucleoside triphosphate pyrophosphatase that hydrolyzes dTTP and UTP. May have a dual role in cell division arrest and in preventing the incorporation of modified nucleotides into cellular nucleic acids. This chain is dTTP/UTP pyrophosphatase, found in Bacteroides fragilis (strain ATCC 25285 / DSM 2151 / CCUG 4856 / JCM 11019 / LMG 10263 / NCTC 9343 / Onslow / VPI 2553 / EN-2).